The following is a 252-amino-acid chain: Protein BTG3 (252 aa).

A disordered region spans residues 138-165 (VTSDYHSGSSSSDEETSKEVEVKPNSVT).

Belongs to the BTG family.

Functionally, overexpression impairs serum-induced cell cycle progression from the G0/G1 to S phase. The polypeptide is Protein BTG3 (BTG3) (Sus scrofa (Pig)).